The primary structure comprises 278 residues: 4-diphosphocytidyl-2-C-methyl-D-erythritol kinase (278 aa).

Residue K9 is part of the active site. ATP is bound at residue P93–S103. D135 is a catalytic residue.

It belongs to the GHMP kinase family. IspE subfamily.

It catalyses the reaction 4-CDP-2-C-methyl-D-erythritol + ATP = 4-CDP-2-C-methyl-D-erythritol 2-phosphate + ADP + H(+). Its pathway is isoprenoid biosynthesis; isopentenyl diphosphate biosynthesis via DXP pathway; isopentenyl diphosphate from 1-deoxy-D-xylulose 5-phosphate: step 3/6. Functionally, catalyzes the phosphorylation of the position 2 hydroxy group of 4-diphosphocytidyl-2C-methyl-D-erythritol. The chain is 4-diphosphocytidyl-2-C-methyl-D-erythritol kinase from Nitrosomonas eutropha (strain DSM 101675 / C91 / Nm57).